Here is a 156-residue protein sequence, read N- to C-terminus: Cyanate hydratase (156 aa).

Residues arginine 96, glutamate 99, and serine 122 contribute to the active site.

The protein belongs to the cyanase family.

The catalysed reaction is cyanate + hydrogencarbonate + 3 H(+) = NH4(+) + 2 CO2. Functionally, catalyzes the reaction of cyanate with bicarbonate to produce ammonia and carbon dioxide. In Burkholderia cenocepacia (strain ATCC BAA-245 / DSM 16553 / LMG 16656 / NCTC 13227 / J2315 / CF5610) (Burkholderia cepacia (strain J2315)), this protein is Cyanate hydratase.